The following is a 97-amino-acid chain: Putative pterin-4-alpha-carbinolamine dehydratase (97 aa).

It belongs to the pterin-4-alpha-carbinolamine dehydratase family.

It carries out the reaction (4aS,6R)-4a-hydroxy-L-erythro-5,6,7,8-tetrahydrobiopterin = (6R)-L-erythro-6,7-dihydrobiopterin + H2O. The protein is Putative pterin-4-alpha-carbinolamine dehydratase of Cyanothece sp. (strain PCC 7425 / ATCC 29141).